A 349-amino-acid polypeptide reads, in one-letter code: Putative methylesterase 12, chloroplastic (349 aa).

Residues Met-1–Leu-77 constitute a chloroplast transit peptide. The segment at Gly-61–Ser-80 is disordered. Catalysis depends on Ser-173, which acts as the Acyl-ester intermediate. Active-site charge relay system residues include Asp-300 and His-328.

It belongs to the AB hydrolase superfamily. Methylesterase family.

Its subcellular location is the plastid. The protein localises to the chloroplast. Functionally, putative methylesterase. The chain is Putative methylesterase 12, chloroplastic from Arabidopsis thaliana (Mouse-ear cress).